The primary structure comprises 68 residues: Phycobilisome 7.8 kDa linker polypeptide, allophycocyanin-associated, core (68 aa).

Residues 2–57 (ARLFKVTACVPSQTRIRTQRELQNTYFTKLVPFENWFREQQRIMKMGGKIVKVELA) enclose the CpcD-like domain.

Belongs to the phycobilisome linker protein family.

It is found in the cellular thylakoid membrane. In terms of biological role, rod linker protein, associated with allophycocyanin. Linker polypeptides determine the state of aggregation and the location of the disk-shaped phycobiliprotein units within the phycobilisome and modulate their spectroscopic properties in order to mediate a directed and optimal energy transfer. The polypeptide is Phycobilisome 7.8 kDa linker polypeptide, allophycocyanin-associated, core (apcC) (Microchaete diplosiphon (Fremyella diplosiphon)).